Here is a 203-residue protein sequence, read N- to C-terminus: Urease accessory protein UreG (203 aa).

A GTP-binding site is contributed by 10-17 (GPVGAGKT).

This sequence belongs to the SIMIBI class G3E GTPase family. UreG subfamily. Homodimer. UreD, UreF and UreG form a complex that acts as a GTP-hydrolysis-dependent molecular chaperone, activating the urease apoprotein by helping to assemble the nickel containing metallocenter of UreC. The UreE protein probably delivers the nickel.

The protein resides in the cytoplasm. Functionally, facilitates the functional incorporation of the urease nickel metallocenter. This process requires GTP hydrolysis, probably effectuated by UreG. The chain is Urease accessory protein UreG from Lachnoclostridium phytofermentans (strain ATCC 700394 / DSM 18823 / ISDg) (Clostridium phytofermentans).